Consider the following 383-residue polypeptide: Delta(12)-fatty-acid desaturase (383 aa).

The segment at Met-1–Val-24 is disordered. Positions Lys-14–Val-24 are enriched in basic and acidic residues. The helical transmembrane segment at Leu-56–Leu-76 threads the bilayer. Positions His-105–His-109 match the Histidine box-1 motif. A helical membrane pass occupies residues Trp-117–Trp-137. A Histidine box-2 motif is present at residues His-141–His-145. Helical transmembrane passes span Ile-179–Ser-199, Ile-225–Ala-245, and Ile-252–Leu-272. The Histidine box-3 signature appears at His-315–His-319.

It belongs to the fatty acid desaturase type 1 family. In terms of assembly, homo- and heterodimer. Interacts with FAD3 but not with FAD6. FAD2-FAD3 heterodimers can form a metabolic channel in which 18:1-PC is converted to 18:3-PC without releasing a free 18:2-PC intermediate. As to expression, expressed in shoots and roots. Expressed in leaves, stems, flowers and siliques.

Its subcellular location is the endoplasmic reticulum membrane. It localises to the microsome membrane. It carries out the reaction (9Z)-octadecenoyl-CoA + 2 Fe(II)-[cytochrome b5] + O2 + 2 H(+) = (9Z,12Z)-octadecadienoyl-CoA + 2 Fe(III)-[cytochrome b5] + 2 H2O. The enzyme catalyses (9Z)-hexadecenoyl-CoA + 2 Fe(II)-[cytochrome b5] + O2 + 2 H(+) = (9Z,12Z)-hexadecadienoyl-CoA + 2 Fe(III)-[cytochrome b5] + 2 H2O. The catalysed reaction is a (9Z)-octadecenoyl-containing glycerolipid + 2 Fe(II)-[cytochrome b5] + O2 + 2 H(+) = a (9Z,12Z)-octadecadienoyl-containing glycerolipid + 2 Fe(III)-[cytochrome b5] + 2 H2O. It catalyses the reaction (9Z)-octadecenoyl-CoA + AH2 + O2 = (9Z,12Z)-octadecadienoyl-CoA + A + 2 H2O. It carries out the reaction (9Z)-hexadecenoyl-CoA + AH2 + O2 = (9Z,12Z)-hexadecadienoyl-CoA + A + 2 H2O. The enzyme catalyses (9Z)-tetradecenoyl-CoA + 2 Fe(II)-[cytochrome b5] + O2 + 2 H(+) = (9Z,12Z)-tetradecadienoyl-CoA + 2 Fe(III)-[cytochrome b5] + 2 H2O. The catalysed reaction is (9Z)-pentadecenoyl-CoA + 2 Fe(II)-[cytochrome b5] + O2 + 2 H(+) = (9Z,12Z)-pentadecadienoyl-CoA + 2 Fe(III)-[cytochrome b5] + 2 H2O. It catalyses the reaction (9Z)-heptadecenoyl-CoA + 2 Fe(II)-[cytochrome b5] + O2 + 2 H(+) = (9Z,12Z)-heptadecadienoyl-CoA + 2 Fe(III)-[cytochrome b5] + 2 H2O. It functions in the pathway lipid metabolism; polyunsaturated fatty acid biosynthesis. In terms of biological role, ER (microsomal) omega-6 fatty acid desaturase introduces the second double bond in the biosynthesis of 18:3 fatty acids, important constituents of plant membranes. Delta(12)-desaturase with regioselectivity determined by the double bond (delta(9) position) and carboxyl group of the substrate. Can use both 16:1 and 18:1 fatty acids as substrates. It is thought to use cytochrome b5 as an electron donor and to act on fatty acids esterified to phosphatidylcholine (PC) and, possibly, other phospholipids. Very low constitutive hydroxylation activity. Required for desaturation of fatty acids present in extraplastidial membranes, including mitochondria. Required for salt tolerance during seed germination and early seedling growth. In Arabidopsis thaliana (Mouse-ear cress), this protein is Delta(12)-fatty-acid desaturase.